Consider the following 149-residue polypeptide: Protein E4.1 (149 aa).

This is Protein E4.1 from Snake adenovirus serotype 1 (SnAdV-1).